Reading from the N-terminus, the 505-residue chain is Glycerol kinase (505 aa).

Threonine 15 serves as a coordination point for ADP. Residues threonine 15, threonine 16, and serine 17 each contribute to the ATP site. Sn-glycerol 3-phosphate is bound at residue threonine 15. Arginine 19 provides a ligand contact to ADP. Sn-glycerol 3-phosphate-binding residues include arginine 85, glutamate 86, tyrosine 136, and aspartate 249. Glycerol is bound by residues arginine 85, glutamate 86, tyrosine 136, aspartate 249, and glutamine 250. Residues threonine 271 and glycine 314 each coordinate ADP. ATP-binding residues include threonine 271, glycine 314, glutamine 318, and glycine 415. Residues glycine 415 and asparagine 419 each contribute to the ADP site.

It belongs to the FGGY kinase family.

The enzyme catalyses glycerol + ATP = sn-glycerol 3-phosphate + ADP + H(+). The protein operates within polyol metabolism; glycerol degradation via glycerol kinase pathway; sn-glycerol 3-phosphate from glycerol: step 1/1. Its activity is regulated as follows. Inhibited by fructose 1,6-bisphosphate (FBP). Key enzyme in the regulation of glycerol uptake and metabolism. Catalyzes the phosphorylation of glycerol to yield sn-glycerol 3-phosphate. The sequence is that of Glycerol kinase from Mycoplasma capricolum subsp. capricolum (strain California kid / ATCC 27343 / NCTC 10154).